Here is a 209-residue protein sequence, read N- to C-terminus: Guanylate kinase (209 aa).

In terms of domain architecture, Guanylate kinase-like spans 9–188 (GIMLVISSPS…SVYQIKCIFT (180 aa)). 16-23 (SPSGGGKT) contributes to the ATP binding site.

Belongs to the guanylate kinase family.

The protein resides in the cytoplasm. It catalyses the reaction GMP + ATP = GDP + ADP. In terms of biological role, essential for recycling GMP and indirectly, cGMP. The chain is Guanylate kinase from Ehrlichia chaffeensis (strain ATCC CRL-10679 / Arkansas).